The following is a 164-amino-acid chain: uncharacterized protein (164 aa).

Its subcellular location is the mitochondrion. This is an uncharacterized protein from Arabidopsis thaliana (Mouse-ear cress).